We begin with the raw amino-acid sequence, 130 residues long: Nascent polypeptide-associated complex protein (130 aa).

The region spanning 8 to 75 (PKMMRQMQKM…AKNIKKDDIK (68 aa)) is the NAC-A/B domain.

It belongs to the NAC-alpha family. As to quaternary structure, homodimer. Interacts with the ribosome. Binds ribosomal RNA.

Its function is as follows. Contacts the emerging nascent chain on the ribosome. The protein is Nascent polypeptide-associated complex protein of Methanococcus aeolicus (strain ATCC BAA-1280 / DSM 17508 / OCM 812 / Nankai-3).